Here is a 273-residue protein sequence, read N- to C-terminus: HMP-PP phosphatase (273 aa).

The Nucleophile role is filled by Asp8. Residues Asp8, Asp10, and Asp212 each contribute to the Mg(2+) site.

The protein belongs to the HAD-like hydrolase superfamily. Cof family. Mg(2+) is required as a cofactor.

It carries out the reaction 4-amino-2-methyl-5-(diphosphooxymethyl)pyrimidine + H2O = 4-amino-2-methyl-5-(phosphooxymethyl)pyrimidine + phosphate + H(+). Functionally, catalyzes the hydrolysis of 4-amino-2-methyl-5-hydroxymethylpyrimidine pyrophosphate (HMP-PP) to 4-amino-2-methyl-5-hydroxymethylpyrimidine phosphate (HMP-P). The chain is HMP-PP phosphatase from Yersinia pestis bv. Antiqua (strain Antiqua).